Consider the following 261-residue polypeptide: 3beta-hydroxysteroid dehydrogenase 1 (261 aa).

NAD(+) contacts are provided by residues 65 to 66 (DV), Asn92, Tyr158, and Lys162. Tyr158 serves as the catalytic Proton acceptor.

This sequence belongs to the short-chain dehydrogenases/reductases (SDR) family.

The catalysed reaction is 3-oxo-5beta-cholan-24-oate + NADH + H(+) = isolithocholate + NAD(+). It catalyses the reaction 12alpha-hydroxy-3-oxo-5beta-cholan-24-oate + NADH + H(+) = isodeoxycholate + NAD(+). It carries out the reaction 7alpha,12alpha-dihydroxy-3-oxo-5beta-cholan-24-oate + NADH + H(+) = isocholate + NAD(+). The enzyme catalyses 3-oxochenodeoxycholate + NADH + H(+) = isochenodeoxycholate + NAD(+). Involved in the modification of secondary bile acids into iso-bile acids (3beta-bile acids) via epimerization of the 3-OH group through a 3-oxo-intermediate. Catalyzes the reduction of 12-alpha-hydroxy-3-oxo-5-beta-cholan-24-oate (3-oxo-DCA) and 3-oxo-5-beta-cholan-24-oate (3-oxo-LCA) to yield isodeoxycholate (isoDCA) and isolithocholate (isoLCA), respectively. Is also able to catalyze the reduction of 3-dehydrocholate (3-oxo-CA or 7alpha,12alpha-dihydroxy-3-oxo-5beta-cholan-24-oate) and 7-alpha-hydroxy-3-oxo-5-beta-cholan-24-oate (3-oxo-CDCA), into isocholate (isoCA) and isochenodeoxycholate (isoCDCA), respectively. Prefers NADH to NADPH as cosubstrate. The conversion of the abundant bile acid deoxycholate (DCA) into isoDCA by the gut bacterium E.lenta favors the growth of the keystone commensal genus Bacteroides, since isoDCA is less cytotoxic than its parent compound, DCA; iso-bile acids have thus a potential role in modulating gut community composition. In Eggerthella lenta (strain ATCC 25559 / DSM 2243 / CCUG 17323 / JCM 9979 / KCTC 3265 / NCTC 11813 / VPI 0255 / 1899 B) (Eubacterium lentum), this protein is 3beta-hydroxysteroid dehydrogenase 1.